Consider the following 722-residue polypeptide: Glycine--tRNA ligase beta subunit (722 aa).

Belongs to the class-II aminoacyl-tRNA synthetase family. As to quaternary structure, tetramer of two alpha and two beta subunits.

It is found in the cytoplasm. The catalysed reaction is tRNA(Gly) + glycine + ATP = glycyl-tRNA(Gly) + AMP + diphosphate. In Synechocystis sp. (strain ATCC 27184 / PCC 6803 / Kazusa), this protein is Glycine--tRNA ligase beta subunit (glyS).